A 210-amino-acid chain; its full sequence is Dephospho-CoA kinase (210 aa).

Residues 4 to 202 (WVGLTGGIGS…AFYSGIFASK (199 aa)) enclose the DPCK domain. Position 12 to 17 (12 to 17 (GSGKSA)) interacts with ATP.

The protein belongs to the CoaE family.

The protein localises to the cytoplasm. It carries out the reaction 3'-dephospho-CoA + ATP = ADP + CoA + H(+). It participates in cofactor biosynthesis; coenzyme A biosynthesis; CoA from (R)-pantothenate: step 5/5. Functionally, catalyzes the phosphorylation of the 3'-hydroxyl group of dephosphocoenzyme A to form coenzyme A. The chain is Dephospho-CoA kinase from Neisseria gonorrhoeae (strain ATCC 700825 / FA 1090).